Consider the following 458-residue polypeptide: Tubulin beta chain (458 aa).

8 residues coordinate GTP: Q11, E69, S138, G142, T143, G144, N204, and N226. E69 contributes to the Mg(2+) binding site. The segment at 426-458 (EAATVEGEEEEDEYAEGGVVNGDQSYDEPYQAA) is disordered. A compositionally biased stretch (acidic residues) spans 431–440 (EGEEEEDEYA).

The protein belongs to the tubulin family. As to quaternary structure, dimer of alpha and beta chains. A typical microtubule is a hollow water-filled tube with an outer diameter of 25 nm and an inner diameter of 15 nM. Alpha-beta heterodimers associate head-to-tail to form protofilaments running lengthwise along the microtubule wall with the beta-tubulin subunit facing the microtubule plus end conferring a structural polarity. Microtubules usually have 13 protofilaments but different protofilament numbers can be found in some organisms and specialized cells. It depends on Mg(2+) as a cofactor.

It localises to the cytoplasm. Its subcellular location is the cytoskeleton. Tubulin is the major constituent of microtubules, a cylinder consisting of laterally associated linear protofilaments composed of alpha- and beta-tubulin heterodimers. Microtubules grow by the addition of GTP-tubulin dimers to the microtubule end, where a stabilizing cap forms. Below the cap, tubulin dimers are in GDP-bound state, owing to GTPase activity of alpha-tubulin. This Pyropia yezoensis (Susabi-nori) protein is Tubulin beta chain (TUBB1).